A 132-amino-acid polypeptide reads, in one-letter code: Glycine cleavage system H protein (132 aa).

One can recognise a Lipoyl-binding domain in the interval 24–106 (IATIGLSAFA…YGDGWLIKVR (83 aa)). Lys-65 carries the post-translational modification N6-lipoyllysine.

Belongs to the GcvH family. As to quaternary structure, the glycine cleavage system is composed of four proteins: P, T, L and H. It depends on (R)-lipoate as a cofactor.

In terms of biological role, the glycine cleavage system catalyzes the degradation of glycine. The H protein shuttles the methylamine group of glycine from the P protein to the T protein. The protein is Glycine cleavage system H protein of Rippkaea orientalis (strain PCC 8801 / RF-1) (Cyanothece sp. (strain PCC 8801)).